Here is a 251-residue protein sequence, read N- to C-terminus: CDP-diacylglycerol pyrophosphatase (251 aa).

Residues 4–24 traverse the membrane as a helical segment; it reads AGLLFLVMIVIAVVAAGIGYW.

This sequence belongs to the Cdh family.

The protein resides in the cell inner membrane. It catalyses the reaction a CDP-1,2-diacyl-sn-glycerol + H2O = a 1,2-diacyl-sn-glycero-3-phosphate + CMP + 2 H(+). It participates in phospholipid metabolism; CDP-diacylglycerol degradation; phosphatidate from CDP-diacylglycerol: step 1/1. The sequence is that of CDP-diacylglycerol pyrophosphatase from Escherichia coli O127:H6 (strain E2348/69 / EPEC).